A 422-amino-acid polypeptide reads, in one-letter code: Glyceraldehyde-3-phosphate dehydrogenase GAPCP1, chloroplastic (422 aa).

A chloroplast-targeting transit peptide spans 1–69 (MAFSSLLRSA…NARSVQPIKA (69 aa)). Positions 50-63 (SGISSSLQNGNARS) are enriched in polar residues. The tract at residues 50 to 84 (SGISSSLQNGNARSVQPIKATATEVPSAVRRSSSS) is disordered. Thr70 is subject to N-acetylthreonine. NAD(+) is bound by residues 96 to 97 (RI), Asp118, and Arg164. D-glyceraldehyde 3-phosphate-binding positions include 235-237 (SCT), Thr266, 295-296 (TG), and Arg318. The active-site Nucleophile is the Cys236. Asn400 provides a ligand contact to NAD(+).

Belongs to the glyceraldehyde-3-phosphate dehydrogenase family. As to quaternary structure, homotetramer. In terms of tissue distribution, expressed in shoot and root vasculature, leaf veins and vascular tissue of flowers and siliques.

The protein resides in the plastid. It is found in the chloroplast stroma. The enzyme catalyses D-glyceraldehyde 3-phosphate + phosphate + NAD(+) = (2R)-3-phospho-glyceroyl phosphate + NADH + H(+). Its function is as follows. Involved in plastidial glycolytic pathway and plays a specific role in glycolytic energy production in non-green plastids and chloroplasts. Essential for breakdown of starch to form sucrose for export to non-photosynthetic tissues, and to generate primary metabolites for anabolic pathways such as fatty acid and amino acid synthesis. Plays an important role in plant development by providing substrates for the phosphorylated pathway of serine biosynthesis in roots. Plays a crucial role in pollen development. Functionally redundant with GAPCP2. This Arabidopsis thaliana (Mouse-ear cress) protein is Glyceraldehyde-3-phosphate dehydrogenase GAPCP1, chloroplastic (GAPCP1).